A 249-amino-acid polypeptide reads, in one-letter code: Probable cobalt-factor III C(17)-methyltransferase (249 aa).

This sequence belongs to the precorrin methyltransferase family.

The enzyme catalyses Co(II)-factor III + S-adenosyl-L-methionine + H(+) = Co(II)-factor IV + S-adenosyl-L-homocysteine. The protein operates within cofactor biosynthesis; adenosylcobalamin biosynthesis; cob(II)yrinate a,c-diamide from sirohydrochlorin (anaerobic route): step 3/10. Methyltransferase that likely catalyzes the ring contraction and methylation of C-17 in cobalt-factor III to form cobalt-factor IV. May also convert cobalt-precorrin-3 to cobalt-precorrin-4. This Methanocaldococcus jannaschii (strain ATCC 43067 / DSM 2661 / JAL-1 / JCM 10045 / NBRC 100440) (Methanococcus jannaschii) protein is Probable cobalt-factor III C(17)-methyltransferase (cbiH).